A 411-amino-acid polypeptide reads, in one-letter code: LL-diaminopimelate aminotransferase (411 aa).

Residues Y15 and G42 each coordinate substrate. Residues Y72, 108–109, Y132, N187, Y218, and 246–248 each bind pyridoxal 5'-phosphate; these read SK and SFS. 3 residues coordinate substrate: K109, Y132, and N187. Residue K249 is modified to N6-(pyridoxal phosphate)lysine. Positions 257 and 292 each coordinate pyridoxal 5'-phosphate. N292 and R388 together coordinate substrate.

This sequence belongs to the class-I pyridoxal-phosphate-dependent aminotransferase family. LL-diaminopimelate aminotransferase subfamily. In terms of assembly, homodimer. The cofactor is pyridoxal 5'-phosphate.

It catalyses the reaction (2S,6S)-2,6-diaminopimelate + 2-oxoglutarate = (S)-2,3,4,5-tetrahydrodipicolinate + L-glutamate + H2O + H(+). It functions in the pathway amino-acid biosynthesis; L-lysine biosynthesis via DAP pathway; LL-2,6-diaminopimelate from (S)-tetrahydrodipicolinate (aminotransferase route): step 1/1. In terms of biological role, involved in the synthesis of meso-diaminopimelate (m-DAP or DL-DAP), required for both lysine and peptidoglycan biosynthesis. Catalyzes the direct conversion of tetrahydrodipicolinate to LL-diaminopimelate. The protein is LL-diaminopimelate aminotransferase of Synechococcus elongatus (strain ATCC 33912 / PCC 7942 / FACHB-805) (Anacystis nidulans R2).